The chain runs to 62 residues: Large ribosomal subunit protein bL28 (62 aa).

A disordered region spans residues Met1–Arg27. Residues Gly9–Lys26 are compositionally biased toward polar residues.

This sequence belongs to the bacterial ribosomal protein bL28 family.

In Oceanobacillus iheyensis (strain DSM 14371 / CIP 107618 / JCM 11309 / KCTC 3954 / HTE831), this protein is Large ribosomal subunit protein bL28.